A 217-amino-acid chain; its full sequence is DNA repair protein homolog YobH (217 aa).

Positions 1-68 (MAKAIQSSMW…RPLSKMWGIG (68 aa)) constitute a UmuC domain.

This sequence belongs to the DNA polymerase type-Y family.

The polypeptide is DNA repair protein homolog YobH (yobH) (Bacillus subtilis (strain 168)).